Consider the following 462-residue polypeptide: Cysteine--tRNA ligase (462 aa).

Cysteine 24 is a Zn(2+) binding site. The short motif at proline 26–histidine 36 is the 'HIGH' region element. 3 residues coordinate Zn(2+): cysteine 199, histidine 224, and glutamate 228. The 'KMSKS' region signature appears at lysine 256 to serine 260. Lysine 259 contributes to the ATP binding site.

The protein belongs to the class-I aminoacyl-tRNA synthetase family. Monomer. Zn(2+) serves as cofactor.

It localises to the cytoplasm. It carries out the reaction tRNA(Cys) + L-cysteine + ATP = L-cysteinyl-tRNA(Cys) + AMP + diphosphate. The polypeptide is Cysteine--tRNA ligase (Campylobacter jejuni subsp. jejuni serotype O:23/36 (strain 81-176)).